Here is a 169-residue protein sequence, read N- to C-terminus: ATP synthase subunit b (169 aa).

A helical transmembrane segment spans residues 13–33 (LFLFQLINFLIIVFILKKFLF).

It belongs to the ATPase B chain family. In terms of assembly, F-type ATPases have 2 components, F(1) - the catalytic core - and F(0) - the membrane proton channel. F(1) has five subunits: alpha(3), beta(3), gamma(1), delta(1), epsilon(1). F(0) has three main subunits: a(1), b(2) and c(10-14). The alpha and beta chains form an alternating ring which encloses part of the gamma chain. F(1) is attached to F(0) by a central stalk formed by the gamma and epsilon chains, while a peripheral stalk is formed by the delta and b chains.

It is found in the cell inner membrane. In terms of biological role, f(1)F(0) ATP synthase produces ATP from ADP in the presence of a proton or sodium gradient. F-type ATPases consist of two structural domains, F(1) containing the extramembraneous catalytic core and F(0) containing the membrane proton channel, linked together by a central stalk and a peripheral stalk. During catalysis, ATP synthesis in the catalytic domain of F(1) is coupled via a rotary mechanism of the central stalk subunits to proton translocation. Its function is as follows. Component of the F(0) channel, it forms part of the peripheral stalk, linking F(1) to F(0). The polypeptide is ATP synthase subunit b (Endomicrobium trichonymphae).